The primary structure comprises 294 residues: tRNA dimethylallyltransferase (294 aa).

Residue 10 to 17 participates in ATP binding; that stretch reads GPTAVGKT. 12 to 17 serves as a coordination point for substrate; sequence TAVGKT. The interval 35–38 is interaction with substrate tRNA; it reads DSQQ.

The protein belongs to the IPP transferase family. Monomer. Requires Mg(2+) as cofactor.

It catalyses the reaction adenosine(37) in tRNA + dimethylallyl diphosphate = N(6)-dimethylallyladenosine(37) in tRNA + diphosphate. In terms of biological role, catalyzes the transfer of a dimethylallyl group onto the adenine at position 37 in tRNAs that read codons beginning with uridine, leading to the formation of N6-(dimethylallyl)adenosine (i(6)A). The sequence is that of tRNA dimethylallyltransferase from Streptococcus mutans serotype c (strain ATCC 700610 / UA159).